Here is a 261-residue protein sequence, read N- to C-terminus: Homeobox-leucine zipper protein HOX24 (261 aa).

Disordered stretches follow at residues 42–67 (AAAAGRGGGDGDGGGGGGGGGERKRR) and 160–188 (KLNERQDQSGSCDGGGAEGDDDDKRNSVM). A compositionally biased stretch (gly residues) spans 46–61 (GRGGGDGDGGGGGGGG). The homeobox DNA-binding region spans 61–121 (GGERKRRFTE…NKRARWRSKQ (61 aa)). Residues 120–164 (KQIEHDYAALRAQYDALHARVESLRQEKLALADQVDELRGKLNER) are leucine-zipper.

The protein belongs to the HD-ZIP homeobox family. Class I subfamily. In terms of tissue distribution, expressed in roots and panicles.

The protein localises to the nucleus. In terms of biological role, probable transcription factor. This is Homeobox-leucine zipper protein HOX24 (HOX24) from Oryza sativa subsp. japonica (Rice).